A 305-amino-acid chain; its full sequence is Homoserine kinase (305 aa).

90–100 (PLARGLGSSAS) serves as a coordination point for ATP.

The protein belongs to the GHMP kinase family. Homoserine kinase subfamily.

Its subcellular location is the cytoplasm. The catalysed reaction is L-homoserine + ATP = O-phospho-L-homoserine + ADP + H(+). It participates in amino-acid biosynthesis; L-threonine biosynthesis; L-threonine from L-aspartate: step 4/5. In terms of biological role, catalyzes the ATP-dependent phosphorylation of L-homoserine to L-homoserine phosphate. The chain is Homoserine kinase from Staphylococcus saprophyticus subsp. saprophyticus (strain ATCC 15305 / DSM 20229 / NCIMB 8711 / NCTC 7292 / S-41).